The chain runs to 544 residues: Chaperonin GroEL (544 aa).

ATP is bound by residues 30 to 33 (TLGP), K51, 87 to 91 (DGTTT), G415, 481 to 483 (DAL), and D497.

It belongs to the chaperonin (HSP60) family. In terms of assembly, forms a cylinder of 14 subunits composed of two heptameric rings stacked back-to-back. Interacts with the co-chaperonin GroES.

It is found in the cytoplasm. It carries out the reaction ATP + H2O + a folded polypeptide = ADP + phosphate + an unfolded polypeptide.. Together with its co-chaperonin GroES, plays an essential role in assisting protein folding. The GroEL-GroES system forms a nano-cage that allows encapsulation of the non-native substrate proteins and provides a physical environment optimized to promote and accelerate protein folding. In Chlamydia felis (strain Fe/C-56) (Chlamydophila felis), this protein is Chaperonin GroEL.